The sequence spans 385 residues: Protein hunchback (385 aa).

2 disordered regions span residues 1–94 (IGGI…YDAM) and 124–216 (ESRA…PGLR). Positions 63 to 77 (SASPSSSSKDSNGHS) are enriched in low complexity. Composition is skewed to basic and acidic residues over residues 126–135 (RASDARDHSP) and 173–203 (PERR…REGS). C2H2-type zinc fingers lie at residues 229 to 251 (FKCK…SKEH), 258 to 280 (LCCR…MRNH), 286 to 308 (FQCS…LKSH), and 314 to 338 (YRCA…KYQH). The interval 361–385 (TRRGPKQKPLSKIFEQQTGTNNHSP) is disordered. The segment covering 374-385 (FEQQTGTNNHSP) has biased composition (polar residues).

This sequence belongs to the hunchback C2H2-type zinc-finger protein family.

The protein resides in the nucleus. In terms of biological role, gap class segmentation protein that controls development of head structures. The sequence is that of Protein hunchback (hb) from Bombyx mori (Silk moth).